The chain runs to 386 residues: Succinate--CoA ligase [ADP-forming] subunit beta (386 aa).

One can recognise an ATP-grasp domain in the interval 9–244 (KELLKQFGVP…LDEEDPAEIE (236 aa)). ATP-binding positions include Lys46, 53–55 (GRG), Glu99, Ala102, and Glu107. Mg(2+) is bound by residues Asn199 and Asp213. Substrate-binding positions include Asn264 and 321 to 323 (GIM).

The protein belongs to the succinate/malate CoA ligase beta subunit family. As to quaternary structure, heterotetramer of two alpha and two beta subunits. It depends on Mg(2+) as a cofactor.

The enzyme catalyses succinate + ATP + CoA = succinyl-CoA + ADP + phosphate. It catalyses the reaction GTP + succinate + CoA = succinyl-CoA + GDP + phosphate. It functions in the pathway carbohydrate metabolism; tricarboxylic acid cycle; succinate from succinyl-CoA (ligase route): step 1/1. Its function is as follows. Succinyl-CoA synthetase functions in the citric acid cycle (TCA), coupling the hydrolysis of succinyl-CoA to the synthesis of either ATP or GTP and thus represents the only step of substrate-level phosphorylation in the TCA. The beta subunit provides nucleotide specificity of the enzyme and binds the substrate succinate, while the binding sites for coenzyme A and phosphate are found in the alpha subunit. This chain is Succinate--CoA ligase [ADP-forming] subunit beta, found in Bordetella avium (strain 197N).